Consider the following 209-residue polypeptide: Probable nicotinate-nucleotide adenylyltransferase (209 aa).

Belongs to the NadD family.

The enzyme catalyses nicotinate beta-D-ribonucleotide + ATP + H(+) = deamido-NAD(+) + diphosphate. It functions in the pathway cofactor biosynthesis; NAD(+) biosynthesis; deamido-NAD(+) from nicotinate D-ribonucleotide: step 1/1. In terms of biological role, catalyzes the reversible adenylation of nicotinate mononucleotide (NaMN) to nicotinic acid adenine dinucleotide (NaAD). In Idiomarina loihiensis (strain ATCC BAA-735 / DSM 15497 / L2-TR), this protein is Probable nicotinate-nucleotide adenylyltransferase.